The primary structure comprises 539 residues: Hydroxylamine reductase (539 aa).

[4Fe-4S] cluster contacts are provided by Cys3, Cys6, Cys13, and Cys19. His240, Glu264, Cys308, Cys395, Cys423, Cys448, Glu482, and Lys484 together coordinate hybrid [4Fe-2O-2S] cluster. A Cysteine persulfide modification is found at Cys395.

Belongs to the HCP family. [4Fe-4S] cluster serves as cofactor. The cofactor is hybrid [4Fe-2O-2S] cluster.

It localises to the cytoplasm. It catalyses the reaction A + NH4(+) + H2O = hydroxylamine + AH2 + H(+). Its function is as follows. Catalyzes the reduction of hydroxylamine to form NH(3) and H(2)O. The protein is Hydroxylamine reductase of Thermodesulfovibrio yellowstonii (strain ATCC 51303 / DSM 11347 / YP87).